We begin with the raw amino-acid sequence, 353 residues long: rRNA methyltransferase 1, mitochondrial (353 aa).

A mitochondrion-targeting transit peptide spans 1 to 20; that stretch reads MALLSTVRGATWGRLVTRHF. The disordered stretch occupies residues 311 to 353; the sequence is PTEGERRQLLQDPQEPSARSEGLSMAQHPGLSSGPEKERQNEG.

Belongs to the class IV-like SAM-binding methyltransferase superfamily. RNA methyltransferase TrmH family.

It localises to the mitochondrion matrix. It carries out the reaction guanosine(1145) in 16S rRNA + S-adenosyl-L-methionine = 2'-O-methylguanosine(1145) in 16S rRNA + S-adenosyl-L-homocysteine + H(+). S-adenosyl-L-methionine-dependent 2'-O-ribose methyltransferase that catalyzes the formation of 2'-O-methylguanosine at position 1145 (Gm1145) in the 16S mitochondrial large subunit ribosomal RNA (mtLSU rRNA), a universally conserved modification in the peptidyl transferase domain of the mtLSU rRNA. In Homo sapiens (Human), this protein is rRNA methyltransferase 1, mitochondrial.